The chain runs to 358 residues: Myb family transcription factor IPN2 (358 aa).

A disordered region spans residues 1-20; it reads MERMFPPKKPSTMNSHDRPM. The HTH myb-type domain maps to 32 to 92; it reads TDPKPRLRWT…HLQKFRLGKQ (61 aa). The H-T-H motif DNA-binding region spans 63–88; sequence PKTIMRVMGVKGLTLYHLKSHLQKFR. Residues 127–171 adopt a coiled-coil conformation; it reads NMNEMQIEVQRRLHEQLEVQKHLQLRIEAQGKYMQSILEKAYQTL. The LHEQLE signature appears at 139-144; sequence LHEQLE. The tract at residues 310 to 358 is disordered; sequence IYDSKPEEKKFDASMKLERPSPRRAPLGERMSPMITTGTMAQGRSSPFG. A compositionally biased stretch (basic and acidic residues) spans 311–330; that stretch reads YDSKPEEKKFDASMKLERPS. The segment covering 343-358 has biased composition (polar residues); sequence MITTGTMAQGRSSPFG.

It belongs to the MYB-CC family. Interacts with NSP2. Expressed in leaves, stems, nodules and roots.

Its subcellular location is the nucleus. In terms of biological role, transcriptional regulator required for Nod-factor-induced gene expression. Transcription activator involved in the induction of NIN and ENOD40 genes, which are required for rhizobial infection and early nodule development. Possesses strong transactivation activity in vitro. Does not seem to contribute to the early steps of the arbuscular mycorrhizal fungus infection and colonization processes in roots. This chain is Myb family transcription factor IPN2, found in Lotus japonicus (Lotus corniculatus var. japonicus).